Consider the following 440-residue polypeptide: Gap junction alpha-8 protein (440 aa).

The stretch at 2–12 is an intramembrane region; the sequence is GDWSFLGNILE. Topologically, residues 13–21 are cytoplasmic; it reads EVNEHSTVI. Residues 22–42 traverse the membrane as a helical segment; it reads GRVWLTVLFIFRILILGTAAE. The Extracellular portion of the chain corresponds to 43-71; sequence FVWGDEQSDFVCNTQQPGCENVCYDEAFP. 3 cysteine pairs are disulfide-bonded: Cys54–Cys201, Cys61–Cys195, and Cys65–Cys190. Residues 72-92 traverse the membrane as a helical segment; it reads ISHIRLWVLQIIFVSTPSLVY. At 93-161 the chain is on the cytoplasmic side; the sequence is VGHAVHHVRM…GTLLRTYVCH (69 aa). A disordered region spans residues 108-144; it reads EREAEELSQQSPGNGGERAPLAADQGSVKKSSSSSKG. Residues 162 to 182 form a helical membrane-spanning segment; that stretch reads IIFKTLFEVGFIVGHYFLYGF. Over 183-210 the chain is Extracellular; sequence RILPLYRCSRWPCPNVVDCFVSRPTEKT. A helical membrane pass occupies residues 211–231; it reads IFILFMLSVASVSLFLNILEM. The Cytoplasmic portion of the chain corresponds to 232–440; the sequence is SHLGLKKIRS…SRARSDDLTV (209 aa). The tract at residues 334-440 is disordered; the sequence is GAQEGVEEEQ…SRARSDDLTV (107 aa). 2 stretches are compositionally biased toward basic and acidic residues: residues 353–365 and 375–405; these read VGDK…RVST and EEEK…ELTP. The span at 423–432 shows a compositional bias: low complexity; it reads LSRLSKASSR.

The protein belongs to the connexin family. Alpha-type (group II) subfamily. As to quaternary structure, a hemichannel or connexon is composed of a hexamer of connexins. A functional gap junction is formed by the apposition of two hemichannels. Forms heteromeric channels with GJA3. Detected in eye lens (at protein level). Eye lens.

It is found in the cell membrane. Its subcellular location is the cell junction. It localises to the gap junction. Its function is as follows. Structural component of eye lens gap junctions. Gap junctions are dodecameric channels that connect the cytoplasm of adjoining cells. They are formed by the docking of two hexameric hemichannels, one from each cell membrane. Small molecules and ions diffuse from one cell to a neighboring cell via the central pore. The sequence is that of Gap junction alpha-8 protein (GJA8) from Ovis aries (Sheep).